Reading from the N-terminus, the 403-residue chain is MHLIFFFSYFLRRYLLLLCAILILRAPLAHSLIPPLTCVNTGTVESDVTGIRFDRCLDTDSLAKISLSTVMSKARVYTDVNVIRPKDYWDYESLNVQWGEQDDYEVVRKVGRGKYSEVFEGINMNNNEKCIIKILKPVKKKKIRREIKILQNLCGGPNIVKLLDVVRDQHSKTPSLIFEYVNSTDFKVLYPTLTDYDIRYYIYELLKALDFCHSQGIMHRDVKPHNVMIDHELRKLRLIDWGLAEFYHPGKEYNVRVASRYFKGPELLVDLQDYDYSLDMWSLGCMFAGMIFRKEPFFYGHDNQDQLVKIAKVLGTDELNAYLNKYQLELDTQLEALVGRHSRKPWSKFINADNRHLVSPEAIDYLDKLLRYDHQDRLTAKEAMAHPYFAQVRAAESSRMRTQ.

Positions 1 to 31 (MHLIFFFSYFLRRYLLLLCAILILRAPLAHS) are cleaved as a signal peptide. One can recognise a Protein kinase domain in the interval 104–389 (YEVVRKVGRG…AKEAMAHPYF (286 aa)). Residues 110–118 (VGRGKYSEV) and Lys133 each bind ATP. A glycan (N-linked (GlcNAc...) asparagine) is linked at Asn182. Residue Asp221 is the Proton acceptor of the active site.

The protein belongs to the protein kinase superfamily. Ser/Thr protein kinase family. CK2 subfamily. As to quaternary structure, heterotetramer of two catalytic alpha subunits and two regulatory beta subunits. In terms of tissue distribution, seems to be present in all plant organs. But seems to be more expressed than CKA1.

Its subcellular location is the nucleus. It localises to the nucleolus. The catalysed reaction is L-seryl-[protein] + ATP = O-phospho-L-seryl-[protein] + ADP + H(+). It catalyses the reaction L-threonyl-[protein] + ATP = O-phospho-L-threonyl-[protein] + ADP + H(+). In terms of biological role, casein kinases are operationally defined by their preferential utilization of acidic proteins such as caseins as substrates. The alpha chain contains the catalytic site. The tetrameric holoenzyme CK2, composed of two alpha and two beta subunits, phosphorylates the transcription factor PIF1 after an exposure to light, resulting in a proteasome-dependent degradation of PIF1 and promotion of photomorphogenesis. CK2 phosphorylates translation initiation factors. May participate in the regulation of the initiation of translation. Acts as circadian clock component that maintains the correct period length through phosphorylation of CCA1. May act as an ectokinase that phosphorylates several extracellular proteins. This chain is Casein kinase II subunit alpha-2, found in Arabidopsis thaliana (Mouse-ear cress).